The following is a 1314-amino-acid chain: Ubinuclein-2 (1314 aa).

Residues Met-1–Val-113 form a disordered region. Residue Ser-13 is modified to Phosphoserine. Composition is skewed to basic and acidic residues over residues Arg-16–Arg-31 and Ala-55–Arg-67. The span at Pro-81 to Arg-96 shows a compositional bias: pro residues. Residue Thr-229 is modified to Phosphothreonine. Position 236 is a phosphoserine (Ser-236). Positions Ser-236 to Gly-288 are disordered. Thr-238 is modified (phosphothreonine). A Glycyl lysine isopeptide (Lys-Gly) (interchain with G-Cter in SUMO2) cross-link involves residue Lys-258. Position 297 is a phosphoserine (Ser-297). Disordered regions lie at residues Asp-322–Pro-345, Ala-400–Ser-424, Leu-559–Gly-584, Leu-657–Ser-709, Ala-785–His-818, Gly-849–Gln-893, Tyr-948–Thr-975, Ala-1003–Val-1185, and Pro-1288–Gln-1314. Residues Pro-330 to Leu-341 show a composition bias toward low complexity. Residues Ser-402, Ser-405, and Ser-408 each carry the phosphoserine modification. Positions Gly-415–Ser-424 are enriched in polar residues. Basic and acidic residues-rich tracts occupy residues Gln-560–Ser-570 and Lys-673–Lys-684. Ser-570 is subject to Phosphoserine. Positions Ala-685 to Ser-709 are enriched in low complexity. Polar residues predominate over residues Ser-792–Leu-801. Low complexity predominate over residues Gly-849 to Ala-879. A compositionally biased stretch (polar residues) spans Ser-883–Gln-893. The segment covering Ala-1003–Pro-1013 has biased composition (low complexity). Residues Ala-1014 to Ser-1028 are compositionally biased toward pro residues. Over residues Pro-1029–Ser-1040 the composition is skewed to low complexity. Lys-1036 bears the N6-acetyllysine mark. 2 stretches are compositionally biased toward polar residues: residues Pro-1057–Ser-1132 and Arg-1142–Arg-1153. Residue Ser-1091 is modified to Phosphoserine. Lys-1116 bears the N6-acetyllysine mark. Residues Gly-1305–Gln-1314 are compositionally biased toward basic and acidic residues.

The protein belongs to the ubinuclein family.

The protein is Ubinuclein-2 (Ubn2) of Mus musculus (Mouse).